An 86-amino-acid polypeptide reads, in one-letter code: Superoxide dismutase [Cu-Zn] (86 aa).

Residues 1-26 are disordered; it reads AKEKGGKLTAGLAAGGHWNPNKAPHH. The span at 7–16 shows a compositional bias: low complexity; the sequence is KLTAGLAAGG. His17 serves as a coordination point for Cu cation. Residues His17, His26, His35, and Asp38 each contribute to the Zn(2+) site. His73 contributes to the Cu cation binding site.

It belongs to the Cu-Zn superoxide dismutase family. Homodimer. Cu cation serves as cofactor. It depends on Zn(2+) as a cofactor.

The protein resides in the periplasm. It carries out the reaction 2 superoxide + 2 H(+) = H2O2 + O2. Its function is as follows. Destroys radicals which are normally produced within the cells and which are toxic to biological systems. This Mannheimia haemolytica (Pasteurella haemolytica) protein is Superoxide dismutase [Cu-Zn] (sodC).